The sequence spans 275 residues: Uridine-5'-phosphate dioxygenase (275 aa).

3 residues coordinate Fe cation: His-105, Asp-107, and His-247.

It depends on Fe(2+) as a cofactor.

The catalysed reaction is UMP + 2-oxoglutarate + O2 = uridine-5'-aldehyde + succinate + phosphate + CO2. It participates in antibiotic biosynthesis. Enhanced by ascorbic acid and inhibited by Zn(2+). Dioxygenase involved in the biosynthesis of the capuramycin-type nucleoside antibiotic A-102395. Catalyzes the dephosphorylation and oxidation of UMP to generate uridine-5'-aldehyde. Can also use the alternative alpha-keto acids pyruvate and alpha-ketoadipate (2-oxoadipate), with very low efficiency. Cannot use alpha-ketobutyrate, alpha-ketovalerate and oxaloacetate. The protein is Uridine-5'-phosphate dioxygenase of Amycolatopsis sp.